The chain runs to 135 residues: Transcriptional activator protein (135 aa).

Residues Lys17 to Arg32 carry the Nuclear localization signal motif. A zinc finger lies at Cys37 to His54. Composition is skewed to polar residues over residues Leu77–Ala87 and Ile101–Phe115. A disordered region spans residues Leu77–Arg117. Residues Asn120 to Ile135 form a transactivation region.

Belongs to the geminiviridae transcriptional activator protein family. In terms of assembly, monomer. Homodimer. Homooligomer. Self-interaction correlates with nuclear localization and efficient activation of transcription. Monomers suppress local silencing by interacting with and inactivating host adenosine kinase 2 (ADK2) in the cytoplasm. Interacts with and inhibits host SNF1 kinase. Binds to ssDNA. May interact with host RPS27A. Phosphorylated.

It is found in the host nucleus. The protein resides in the host cytoplasm. Its function is as follows. Multifunctional protein that modulates host antiviral defenses and promotes host attractiveness to insect vectors. Acts as a suppressor of RNA-mediated gene silencing, also known as post-transcriptional gene silencing (PTGS), a mechanism of plant viral defense that limits the accumulation of viral RNAs. TrAP suppresses the host RNA silencing by inhibiting adenosine kinase 2 (ADK2), a kinase involved in a general methylation pathway. Also suppresses the host basal defense by interacting with and inhibiting SNF1 kinase, a key regulator of cell metabolism implicated in innate antiviral defense. Functionally, inhibits signal transduction by the phytohormone jasmonate, making the infected plant more attractive to aphids, which are the second host to play a role as a dissemination vector. Acts by binding to ubiquitin precursor RPS27A, thereby preventing ubiquitin degradation of JAZ. The protein is Transcriptional activator protein of Tomato yellow leaf curl virus (strain Israel) (TYLCV).